The following is a 172-amino-acid chain: MSQSLTSSVETDSKTGSSKAISFQDYLDLSALDWARLRAILAPTLYVDYTKIGKEKWDAMSADDFMAMVSNDDFLGDPCVKTQHLIGATYWERVSESKVIGHHQLRAAHQVYTSPDLKTVKLRGHSHATNEHYYVKSSGVWKFAGLKPEVRWNEYKFEEVFKGSYTQSEKQS.

Y49 serves as a coordination point for substrate. Active-site residues include H84 and H109. N130 serves as a coordination point for substrate.

Belongs to the scytalone dehydratase family. In terms of assembly, homotrimer. Each subunit contains an active site, located in the central part of the hydrophobic core of the monomer, which functions independently.

Functionally, scytalone dehydratase-like protein; part of the Pks2 gene cluster that mediates the formation of infectious structures (appressoria), enabling these fungi to kill insects faster. The product of the Pks2 gene cluster is different from the one of Pks1 and has still not been identified. The polypeptide is Scytalone dehydratase-like protein Arp1 (Metarhizium guizhouense (strain ARSEF 977)).